A 182-amino-acid chain; its full sequence is ATP-dependent protease subunit HslV (182 aa).

The active site involves threonine 10. 3 residues coordinate Na(+): alanine 166, cysteine 169, and serine 172.

It belongs to the peptidase T1B family. HslV subfamily. A double ring-shaped homohexamer of HslV is capped on each side by a ring-shaped HslU homohexamer. The assembly of the HslU/HslV complex is dependent on binding of ATP.

It is found in the cytoplasm. The enzyme catalyses ATP-dependent cleavage of peptide bonds with broad specificity.. Allosterically activated by HslU binding. Its function is as follows. Protease subunit of a proteasome-like degradation complex believed to be a general protein degrading machinery. The sequence is that of ATP-dependent protease subunit HslV from Rickettsia typhi (strain ATCC VR-144 / Wilmington).